Here is a 145-residue protein sequence, read N- to C-terminus: D-aminoacyl-tRNA deacylase (145 aa).

The Gly-cisPro motif, important for rejection of L-amino acids motif lies at 137-138 (GP).

The protein belongs to the DTD family. In terms of assembly, homodimer.

It is found in the cytoplasm. The catalysed reaction is glycyl-tRNA(Ala) + H2O = tRNA(Ala) + glycine + H(+). It carries out the reaction a D-aminoacyl-tRNA + H2O = a tRNA + a D-alpha-amino acid + H(+). Functionally, an aminoacyl-tRNA editing enzyme that deacylates mischarged D-aminoacyl-tRNAs. Also deacylates mischarged glycyl-tRNA(Ala), protecting cells against glycine mischarging by AlaRS. Acts via tRNA-based rather than protein-based catalysis; rejects L-amino acids rather than detecting D-amino acids in the active site. By recycling D-aminoacyl-tRNA to D-amino acids and free tRNA molecules, this enzyme counteracts the toxicity associated with the formation of D-aminoacyl-tRNA entities in vivo and helps enforce protein L-homochirality. The sequence is that of D-aminoacyl-tRNA deacylase from Shewanella putrefaciens (strain CN-32 / ATCC BAA-453).